Consider the following 310-residue polypeptide: Altered inheritance of mitochondria protein 46, mitochondrial (310 aa).

The transit peptide at 1-20 (MRLISKVLVKTNCLEVGMRR) directs the protein to the mitochondrion.

Belongs to the AIM18/AIM46 family.

The protein resides in the mitochondrion. This Saccharomyces cerevisiae (strain RM11-1a) (Baker's yeast) protein is Altered inheritance of mitochondria protein 46, mitochondrial (AIM46).